Reading from the N-terminus, the 929-residue chain is LPS-assembly protein LptD (929 aa).

The signal sequence occupies residues 1–24 (MKLRFIRSAGWLFLLFCLACNARA). The interval 26–208 (LPPLSSKPEQ…EAGDEKLRLA (183 aa)) is disordered. Over residues 44–74 (GDDKPVVIDTERIRGHHEYESGTRSESELRS) the composition is skewed to basic and acidic residues. Polar residues predominate over residues 154-164 (RTQSAPRTLSA). The segment covering 181 to 208 (DQDRPGFAEGERIGGHREEAGDEKLRLA) has biased composition (basic and acidic residues).

The protein belongs to the LptD family. As to quaternary structure, component of the lipopolysaccharide transport and assembly complex. Interacts with LptE and LptA.

It localises to the cell outer membrane. Together with LptE, is involved in the assembly of lipopolysaccharide (LPS) at the surface of the outer membrane. This chain is LPS-assembly protein LptD, found in Nitrosospira multiformis (strain ATCC 25196 / NCIMB 11849 / C 71).